The sequence spans 379 residues: Glucose-1-phosphate adenylyltransferase (379 aa).

Residues glycine 164, 179-180 (EK), and serine 190 each bind alpha-D-glucose 1-phosphate.

Belongs to the bacterial/plant glucose-1-phosphate adenylyltransferase family. As to quaternary structure, homotetramer.

It catalyses the reaction alpha-D-glucose 1-phosphate + ATP + H(+) = ADP-alpha-D-glucose + diphosphate. It participates in glycan biosynthesis; glycogen biosynthesis. Functionally, involved in the biosynthesis of ADP-glucose, a building block required for the elongation reactions to produce glycogen. Catalyzes the reaction between ATP and alpha-D-glucose 1-phosphate (G1P) to produce pyrophosphate and ADP-Glc. This is Glucose-1-phosphate adenylyltransferase from Streptococcus uberis (strain ATCC BAA-854 / 0140J).